A 641-amino-acid polypeptide reads, in one-letter code: Chaperone protein DnaK (641 aa).

At Thr199 the chain carries Phosphothreonine; by autocatalysis. A disordered region spans residues 602–641 (MYADQADQAQQAGGQEEGQAKSADDAVDAEFEEVKDDDKK). A compositionally biased stretch (low complexity) spans 604 to 615 (ADQADQAQQAGG). The span at 626–641 (DAVDAEFEEVKDDDKK) shows a compositional bias: acidic residues.

This sequence belongs to the heat shock protein 70 family.

In terms of biological role, acts as a chaperone. This chain is Chaperone protein DnaK, found in Marinobacter nauticus (strain ATCC 700491 / DSM 11845 / VT8) (Marinobacter aquaeolei).